A 199-amino-acid chain; its full sequence is Minor spike protein H (199 aa).

Positions 171-199 (EDSNGPRLSNLREEKKPNQMPLKNGKLNT) are disordered.

The protein belongs to the microviridae H protein family.

It localises to the virion. Its function is as follows. Probably triggers with protein G the injection of the phage DNA into the host upon conformational changes induced by virus-host receptor interaction. This is Minor spike protein H from Bdellovibrio bacteriovorus (Bacteriophage phiMH2K).